The following is a 1741-amino-acid chain: S-layer protein (1741 aa).

A compositionally biased stretch (polar residues) spans 894–904 (SFTSDSANGSG). The interval 894–913 (SFTSDSANGSGHSVEGGTGD) is disordered.

Post-translationally, glycosylated.

It localises to the secreted. Its subcellular location is the cell wall. The protein localises to the S-layer. Its function is as follows. S-layer protein. The S-layer is a paracrystalline mono-layered assembly of proteins which coats the surface of bacteria. Under laboratory conditions, has a supportive but not a critical role in the function of the cyanobacterium. Shows no apparent hemolytic activity against sheep erythrocytes, however, a slight hemolytic activity is detected during the conformational change caused by the rebinding of Ca(2+). This Synechocystis sp. (strain ATCC 27184 / PCC 6803 / Kazusa) protein is S-layer protein.